The chain runs to 1101 residues: Error-prone DNA polymerase (1101 aa).

Residues 1055-1101 (ADLGHPMDSAVGQTTPQTDSAPRPRPQPRAMHPREQAKRLFPSRDFH) form a disordered region. Residues 1065–1074 (VGQTTPQTDS) are compositionally biased toward polar residues. The segment covering 1086-1101 (HPREQAKRLFPSRDFH) has biased composition (basic and acidic residues).

Belongs to the DNA polymerase type-C family. DnaE2 subfamily.

The protein localises to the cytoplasm. It carries out the reaction DNA(n) + a 2'-deoxyribonucleoside 5'-triphosphate = DNA(n+1) + diphosphate. DNA polymerase involved in damage-induced mutagenesis and translesion synthesis (TLS). It is not the major replicative DNA polymerase. The polypeptide is Error-prone DNA polymerase (Ruegeria pomeroyi (strain ATCC 700808 / DSM 15171 / DSS-3) (Silicibacter pomeroyi)).